A 151-amino-acid polypeptide reads, in one-letter code: Arginine repressor (151 aa).

The protein belongs to the ArgR family.

It is found in the cytoplasm. The protein operates within amino-acid biosynthesis; L-arginine biosynthesis [regulation]. Functionally, regulates arginine biosynthesis genes. The protein is Arginine repressor of Haemophilus influenzae (strain PittGG).